A 178-amino-acid polypeptide reads, in one-letter code: Cytidylate kinase (178 aa).

7 to 15 (GLPGTGTTT) is a binding site for ATP.

Belongs to the cytidylate kinase family. Type 2 subfamily.

The protein localises to the cytoplasm. The enzyme catalyses CMP + ATP = CDP + ADP. It carries out the reaction dCMP + ATP = dCDP + ADP. The protein is Cytidylate kinase of Methanococcus maripaludis (strain C5 / ATCC BAA-1333).